The following is a 189-amino-acid chain: FAS1 domain-containing protein mug57 (189 aa).

The first 24 residues, 1 to 24 (MMKLFCLNIFRFLYTTSFISAVLS), serve as a signal peptide directing secretion. An FAS1 domain is found at 37–182 (EPRLFELLAE…GEMWVLNATL (146 aa)).

It is found in the cytoplasm. It localises to the nucleus. The protein localises to the membrane. Functionally, has a role in sporulation. The sequence is that of FAS1 domain-containing protein mug57 (mug57) from Schizosaccharomyces pombe (strain 972 / ATCC 24843) (Fission yeast).